Here is a 232-residue protein sequence, read N- to C-terminus: Putative N-acetylmannosamine-6-phosphate 2-epimerase (232 aa).

It belongs to the NanE family.

The enzyme catalyses an N-acyl-D-glucosamine 6-phosphate = an N-acyl-D-mannosamine 6-phosphate. It functions in the pathway amino-sugar metabolism; N-acetylneuraminate degradation; D-fructose 6-phosphate from N-acetylneuraminate: step 3/5. Its function is as follows. Converts N-acetylmannosamine-6-phosphate (ManNAc-6-P) to N-acetylglucosamine-6-phosphate (GlcNAc-6-P). This Borreliella afzelii (strain PKo) (Borrelia afzelii) protein is Putative N-acetylmannosamine-6-phosphate 2-epimerase.